Consider the following 470-residue polypeptide: Ribulose bisphosphate carboxylase large chain (470 aa).

Residues Asn-115 and Thr-165 each coordinate substrate. Lys-167 acts as the Proton acceptor in catalysis. Lys-169 is a binding site for substrate. Mg(2+) is bound by residues Lys-193, Asp-195, and Glu-196. Residue Lys-193 is modified to N6-carboxylysine. His-286 serves as the catalytic Proton acceptor. Arg-287, His-319, and Ser-371 together coordinate substrate.

It belongs to the RuBisCO large chain family. Type I subfamily. In terms of assembly, heterohexadecamer of 8 large chains and 8 small chains. It depends on Mg(2+) as a cofactor.

It is found in the carboxysome. It carries out the reaction 2 (2R)-3-phosphoglycerate + 2 H(+) = D-ribulose 1,5-bisphosphate + CO2 + H2O. The catalysed reaction is D-ribulose 1,5-bisphosphate + O2 = 2-phosphoglycolate + (2R)-3-phosphoglycerate + 2 H(+). Functionally, ruBisCO catalyzes two reactions: the carboxylation of D-ribulose 1,5-bisphosphate, the primary event in carbon dioxide fixation, as well as the oxidative fragmentation of the pentose substrate in the photorespiration process. Both reactions occur simultaneously and in competition at the same active site. The chain is Ribulose bisphosphate carboxylase large chain from Synechococcus sp. (strain CC9902).